We begin with the raw amino-acid sequence, 397 residues long: MEVLYSLSKTLKDARDKIVEGTLYSNVSDLIQQFNQMIVTMNGNDFQTGGIGNLPVRNWTFDFGLLGTTLLNLDANYVENARTIIEYFIDFIDNVCMDEMARESQRNGVAPQSEALRKLAGIKFKRINFDNSSEYIENWNLQNRRQRTGFVFHKPNIFPYSASFTLNRSQPMHDNLMGTMWLNAGSEIQVAGFDYSCAINAPANIQQFEHIVQLRRALTTATITLLPDAERFSFPRVINSADGATTWFFNPVILRPNNVEVEFLLNGQIINTYQARFGTIIARNFDAIRLLFQLMRPPNMTPAVNALFPQAQPFQHHATVGLTLRIESAVCESVLADANETLLANVTAVRQEYAIPVGPVFPPGMNWTELITNYSPSREDNLQRVFTVASIRSMLIK.

Residues Asp-62–Leu-73 are interaction with the inner capsid protein VP2. A Zn(2+)-binding site is contributed by His-153. 2 residues coordinate Ca(2+): Asn-266 and Asp-286.

The protein belongs to the rotavirus VP6 family. As to quaternary structure, homotrimer. Interacts with the inner capsid protein VP2. Interacts with the outer capsid glycoprotein VP7. Interacts with the outer capsid protein VP5*. Post-translationally, the N-terminus is blocked. In terms of processing, sumoylated with SUMO1 and SUMO2. Sumoylation of viral proteins seems to have a positive role on viral replication.

Its subcellular location is the virion. Functionally, intermediate capsid protein that self assembles to form an icosahedral capsid with a T=13 symmetry, which consists of 230 trimers of VP6, with channels at each of its five-fold vertices. This capsid constitutes the middle concentric layer of the viral mature particle. The innermost VP2 capsid and the intermediate VP6 capsid remain intact following cell entry to protect the dsRNA from degradation and to prevent unfavorable antiviral responses in the host cell during all the replication cycle of the virus. Nascent transcripts are transcribed within the structural confines of this double-layered particle (DLP) and are extruded through the channels at the five-fold axes. VP6 is required for the transcription activity of the DLP. The chain is Intermediate capsid protein VP6 from Homo sapiens (Human).